Reading from the N-terminus, the 493-residue chain is Alpha-amylase-related protein (493 aa).

Residues 1–19 form the signal peptide; sequence MFKLALTLTLCLAGSLSLA. Position 20 is a pyrrolidone carboxylic acid (Gln-20). Cys-47 and Cys-103 are disulfide-bonded. 3 residues coordinate Ca(2+): Asn-117, Gln-168, and Asp-177. The cysteines at positions 156 and 170 are disulfide-linked. Arg-205 serves as a coordination point for chloride. Catalysis depends on Asp-207, which acts as the Nucleophile. A Ca(2+)-binding site is contributed by His-211. Glu-244 (proton donor) is an active-site residue. Chloride contacts are provided by Asn-307 and Arg-342. Intrachain disulfides connect Cys-375–Cys-381, Cys-417–Cys-440, and Cys-447–Cys-459.

Belongs to the glycosyl hydrolase 13 family. In terms of assembly, monomer. Ca(2+) serves as cofactor. Requires chloride as cofactor.

It is found in the secreted. The catalysed reaction is Endohydrolysis of (1-&gt;4)-alpha-D-glucosidic linkages in polysaccharides containing three or more (1-&gt;4)-alpha-linked D-glucose units.. The polypeptide is Alpha-amylase-related protein (Amyrel) (Drosophila teissieri (Fruit fly)).